The chain runs to 142 residues: Large ribosomal subunit protein bL17 (142 aa).

This sequence belongs to the bacterial ribosomal protein bL17 family. In terms of assembly, part of the 50S ribosomal subunit. Contacts protein L32.

The chain is Large ribosomal subunit protein bL17 from Brucella abortus (strain S19).